A 282-amino-acid chain; its full sequence is Putative quercetin 2,3-dioxygenase VC_A0969 (282 aa).

The disordered stretch occupies residues M1–G21. 4 residues coordinate a divalent metal cation: H59, H61, H103, and E105.

This sequence belongs to the pirin family. The cofactor is a divalent metal cation.

It catalyses the reaction quercetin + O2 = 2-(3,4-dihydroxybenzoyloxy)-4,6-dihydroxybenzoate + CO. It participates in flavonoid metabolism; quercetin degradation. Putative quercetin 2,3-dioxygenase. The sequence is that of Putative quercetin 2,3-dioxygenase VC_A0969 from Vibrio cholerae serotype O1 (strain ATCC 39315 / El Tor Inaba N16961).